Reading from the N-terminus, the 448-residue chain is MAKKLFIKTHGCQMNEYDSARMADLLGESHALELTDDERDADVILLNTCSIREKAQEKVFHQLGRWKKLKAANPDLVIGVGGCVASQEGEHIKKRAPHVDMVFGPQTLHRLPTMLDSRQGAETISMVDVTFPEIEKFDHLPKPTSDGATAFVSVMEGCSKYCTFCVVPYTRGEEVSRPFESVMEEVIHLADQGVREINLLGQNVNAYRGENQLGDEIDLAELIGCVAAVEGIDRIRFTTSHPVEFSDSLIEAYGEIPELVSHLHLPVQAGSDRILAAMKRGHTVEEYVDKLERIRALRPDISFSSDFIIGFPGETEEDFMDTMNLIQRIGFDASFSFVYSPRPGTPAANLEDETPEATKKQRLAILQERLNQQTMQISRRMVGNTERILVTGFSPKDPGQLSGRTENNRVVNFRAPNPTELIGYFVDVEITEALPNSLRGDLASPARY.

An MTTase N-terminal domain is found at 3–120; it reads KKLFIKTHGC…LPTMLDSRQG (118 aa). Positions 12, 49, 83, 158, 162, and 165 each coordinate [4Fe-4S] cluster. One can recognise a Radical SAM core domain in the interval 144–376; the sequence is TSDGATAFVS…QERLNQQTMQ (233 aa). In terms of domain architecture, TRAM spans 379 to 444; the sequence is RRMVGNTERI…PNSLRGDLAS (66 aa).

This sequence belongs to the methylthiotransferase family. MiaB subfamily. In terms of assembly, monomer. The cofactor is [4Fe-4S] cluster.

It is found in the cytoplasm. The enzyme catalyses N(6)-dimethylallyladenosine(37) in tRNA + (sulfur carrier)-SH + AH2 + 2 S-adenosyl-L-methionine = 2-methylsulfanyl-N(6)-dimethylallyladenosine(37) in tRNA + (sulfur carrier)-H + 5'-deoxyadenosine + L-methionine + A + S-adenosyl-L-homocysteine + 2 H(+). Catalyzes the methylthiolation of N6-(dimethylallyl)adenosine (i(6)A), leading to the formation of 2-methylthio-N6-(dimethylallyl)adenosine (ms(2)i(6)A) at position 37 in tRNAs that read codons beginning with uridine. This chain is tRNA-2-methylthio-N(6)-dimethylallyladenosine synthase, found in Chromohalobacter salexigens (strain ATCC BAA-138 / DSM 3043 / CIP 106854 / NCIMB 13768 / 1H11).